The following is a 468-amino-acid chain: ATP synthase subunit beta (468 aa).

155 to 162 is an ATP binding site; it reads GGAGVGKT.

Belongs to the ATPase alpha/beta chains family. In terms of assembly, F-type ATPases have 2 components, CF(1) - the catalytic core - and CF(0) - the membrane proton channel. CF(1) has five subunits: alpha(3), beta(3), gamma(1), delta(1), epsilon(1). CF(0) has three main subunits: a(1), b(2) and c(9-12). The alpha and beta chains form an alternating ring which encloses part of the gamma chain. CF(1) is attached to CF(0) by a central stalk formed by the gamma and epsilon chains, while a peripheral stalk is formed by the delta and b chains.

Its subcellular location is the cell inner membrane. The catalysed reaction is ATP + H2O + 4 H(+)(in) = ADP + phosphate + 5 H(+)(out). Its function is as follows. Produces ATP from ADP in the presence of a proton gradient across the membrane. The catalytic sites are hosted primarily by the beta subunits. This chain is ATP synthase subunit beta, found in Thermotoga petrophila (strain ATCC BAA-488 / DSM 13995 / JCM 10881 / RKU-1).